The primary structure comprises 249 residues: Molybdate/tungstate transport system permease protein WtpB (249 aa).

Over 1 to 10 (MDRRDYLAYA) the chain is Cytoplasmic. The helical transmembrane segment at 11–31 (FAGLGAFLVAFIGLPLFMIFI) threads the bilayer. The Extracellular segment spans residues 32–56 (KQAYDLEALQRTLVDPLVIESIRNS). Residues 53 to 239 (IRNSLFTATV…TISLAVFIFL (187 aa)) form the ABC transmembrane type-1 domain. Residues 57-77 (LFTATVSTLLGILFGVPLGYV) traverse the membrane as a helical segment. The Cytoplasmic segment spans residues 78–96 (LARKEFKGKNFVQALIDTP). A helical transmembrane segment spans residues 97–117 (IVIPHSVVGIMLLVTFSDAIL). Aspartate 118 is a topological domain (extracellular). A helical transmembrane segment spans residues 119–139 (NYKGIVAVMLFVSSPFIVNSA). The Cytoplasmic portion of the chain corresponds to 140–179 (RDGFLSVDEKLEYVARTLGASGLRTFFSVTLPNAIHSIAS). A helical transmembrane segment spans residues 180–200 (GAIMAWARAISEVGAILIVAY). The Extracellular segment spans residues 201–223 (YPKTAQVLIMEYFNNYGLRASRP). Residues 224 to 244 (IAVILVTISLAVFIFLRWLVG) form a helical membrane-spanning segment. Residues 245–249 (RGRNA) are Cytoplasmic-facing.

This sequence belongs to the binding-protein-dependent transport system permease family. The complex is composed of two ATP-binding proteins (WtpC), two transmembrane proteins (WtpB) and a solute-binding protein (WtpA).

It localises to the cell membrane. Part of the ABC transporter complex WtpABC involved in molybdate/tungstate import. Probably responsible for the translocation of the substrate across the membrane. In Pyrococcus furiosus (strain ATCC 43587 / DSM 3638 / JCM 8422 / Vc1), this protein is Molybdate/tungstate transport system permease protein WtpB.